The primary structure comprises 361 residues: 1D-myo-inositol 2-acetamido-2-deoxy-alpha-D-glucopyranoside deacetylase (361 aa).

Residues 1 to 12 (MTTTPQPPPQPD) are compositionally biased toward pro residues. The tract at residues 1 to 27 (MTTTPQPPPQPDETPEGAAGAATAGRD) is disordered. Positions 16-25 (EGAAGAATAG) are enriched in low complexity. The Zn(2+) site is built by H66, D69, and H207.

This sequence belongs to the MshB deacetylase family. It depends on Zn(2+) as a cofactor.

It catalyses the reaction 1D-myo-inositol 2-acetamido-2-deoxy-alpha-D-glucopyranoside + H2O = 1D-myo-inositol 2-amino-2-deoxy-alpha-D-glucopyranoside + acetate. Catalyzes the deacetylation of 1D-myo-inositol 2-acetamido-2-deoxy-alpha-D-glucopyranoside (GlcNAc-Ins) in the mycothiol biosynthesis pathway. The protein is 1D-myo-inositol 2-acetamido-2-deoxy-alpha-D-glucopyranoside deacetylase of Kineococcus radiotolerans (strain ATCC BAA-149 / DSM 14245 / SRS30216).